A 53-amino-acid chain; its full sequence is Small, acid-soluble spore protein K (53 aa).

A disordered region spans residues 1–53 (MRNKAHNFPNQNNNKLEGEPRAKAEYASKRADGTTNTHPQERMRASGERSDFF). Basic and acidic residues-rich tracts occupy residues 16–32 (LEGEPRAKAEYASKRAD) and 39–53 (PQERMRASGERSDFF).

This sequence belongs to the SspK family.

Its subcellular location is the spore core. The chain is Small, acid-soluble spore protein K from Geobacillus kaustophilus (strain HTA426).